We begin with the raw amino-acid sequence, 149 residues long: Transthyretin (149 aa).

Residues 1–20 form the signal peptide; sequence MAFHSLLLLCLAGLVFLSEA. C32 is subject to Sulfocysteine. Residue K37 coordinates L-thyroxine. E64 is subject to 4-carboxyglutamate. E76 and S139 together coordinate L-thyroxine.

It belongs to the transthyretin family. In terms of assembly, homotetramer. Dimer of dimers. In the homotetramer, subunits assemble around a central channel that can accommodate two ligand molecules. Interacts with RBP4. Post-translationally, sulfonation of the reactive cysteine Cys-32 enhances the stability of the native conformation of TTR, avoiding misassembly of the protein leading to amyloid formation. In terms of tissue distribution, highly expressed in the choroid plexus.

The protein resides in the secreted. Functionally, thyroid hormone-binding protein. Probably transports thyroxine from the bloodstream to the brain. This Sminthopsis macroura (Stripe-faced dunnart) protein is Transthyretin (TTR).